Consider the following 198-residue polypeptide: RNA-free ribonuclease P (198 aa).

It belongs to the HARP family.

It catalyses the reaction Endonucleolytic cleavage of RNA, removing 5'-extranucleotides from tRNA precursor.. In terms of biological role, RNA-free RNase P that catalyzes the removal of the 5'-leader sequence from pre-tRNA to produce the mature 5'-terminus. This Nitrosococcus oceani (strain ATCC 19707 / BCRC 17464 / JCM 30415 / NCIMB 11848 / C-107) protein is RNA-free ribonuclease P.